The primary structure comprises 394 residues: tRNA-specific 2-thiouridylase MnmA (394 aa).

Residues 30 to 37 and L56 contribute to the ATP site; that span reads AMSGGVDS. The active-site Nucleophile is C124. C124 and C220 are oxidised to a cystine. G148 serves as a coordination point for ATP. The segment at 170–172 is interaction with tRNA; that stretch reads RDQ. C220 (cysteine persulfide intermediate) is an active-site residue.

The protein belongs to the MnmA/TRMU family.

The protein resides in the cytoplasm. The catalysed reaction is S-sulfanyl-L-cysteinyl-[protein] + uridine(34) in tRNA + AH2 + ATP = 2-thiouridine(34) in tRNA + L-cysteinyl-[protein] + A + AMP + diphosphate + H(+). Catalyzes the 2-thiolation of uridine at the wobble position (U34) of tRNA, leading to the formation of s(2)U34. This is tRNA-specific 2-thiouridylase MnmA from Hyphomonas neptunium (strain ATCC 15444).